Here is a 189-residue protein sequence, read N- to C-terminus: Adenylate kinase (189 aa).

11–16 contributes to the ATP binding site; it reads GSGKGT. The interval 31-60 is NMP; the sequence is STGDVLRAEIKNGTELGKTAKGYIDQGQLI. AMP is bound by residues threonine 32, arginine 37, 58 to 60, 86 to 89, and glutamine 93; these read QLI and GFPR. The segment at 127–137 is LID; the sequence is KRGKESGRADD. Position 128 (arginine 128) interacts with ATP. AMP-binding residues include arginine 134 and arginine 145. Residue glycine 173 participates in ATP binding.

This sequence belongs to the adenylate kinase family. In terms of assembly, monomer.

The protein localises to the cytoplasm. It catalyses the reaction AMP + ATP = 2 ADP. Its pathway is purine metabolism; AMP biosynthesis via salvage pathway; AMP from ADP: step 1/1. In terms of biological role, catalyzes the reversible transfer of the terminal phosphate group between ATP and AMP. Plays an important role in cellular energy homeostasis and in adenine nucleotide metabolism. The polypeptide is Adenylate kinase (Bacteroides fragilis (strain ATCC 25285 / DSM 2151 / CCUG 4856 / JCM 11019 / LMG 10263 / NCTC 9343 / Onslow / VPI 2553 / EN-2)).